A 193-amino-acid polypeptide reads, in one-letter code: Xanthine phosphoribosyltransferase (193 aa).

Residues L20 and N27 each coordinate xanthine. 128 to 132 contributes to the 5-phospho-alpha-D-ribose 1-diphosphate binding site; the sequence is ANGDA. K156 provides a ligand contact to xanthine.

This sequence belongs to the purine/pyrimidine phosphoribosyltransferase family. Xpt subfamily. As to quaternary structure, homodimer.

It localises to the cytoplasm. The enzyme catalyses XMP + diphosphate = xanthine + 5-phospho-alpha-D-ribose 1-diphosphate. It functions in the pathway purine metabolism; XMP biosynthesis via salvage pathway; XMP from xanthine: step 1/1. In terms of biological role, converts the preformed base xanthine, a product of nucleic acid breakdown, to xanthosine 5'-monophosphate (XMP), so it can be reused for RNA or DNA synthesis. This Staphylococcus haemolyticus (strain JCSC1435) protein is Xanthine phosphoribosyltransferase.